We begin with the raw amino-acid sequence, 520 residues long: Transposase for insertion sequence element IS21-like (520 aa).

The HTH IS21-type domain occupies 13–78 (YMWYKVRELQ…KYEEYVRGTL (66 aa)). The Integrase catalytic domain maps to 136–312 (LPETPYGEYA…VPSEEFAVEK (177 aa)).

Belongs to the transposase IS21/IS408/IS1162 family.

Functionally, involved in the transposition of the insertion sequence. The chain is Transposase for insertion sequence element IS21-like (tnpA) from Bacteroides fragilis.